We begin with the raw amino-acid sequence, 212 residues long: Stage 0 sporulation protein A (212 aa).

Residues 5–123 enclose the Response regulatory domain; sequence EVLLADDNRE…VLAQRIRQII (119 aa). The Ca(2+) site is built by Asp-10, Asp-11, and Asp-56. At Asp-56 the chain carries 4-aspartylphosphate. The segment at residues 194–212 is a DNA-binding region (H-T-H motif); sequence PDIAKKFNTTASHVERAIR.

The cofactor is Ca(2+). Post-translationally, phosphorylated by KinA and KinB.

It localises to the cytoplasm. Its function is as follows. May play the central regulatory role in sporulation. It may be an element of the effector pathway responsible for the activation of sporulation genes in response to nutritional stress. Spo0A may act in concert with Spo0H (a sigma factor) to control the expression of some genes that are critical to the sporulation process. Repressor of abrB, activator of the spoIIa operon. Binds the DNA sequence 5'-TGNCGAA-3' (0A box). This chain is Stage 0 sporulation protein A (spo0A), found in Brevibacillus parabrevis.